Consider the following 256-residue polypeptide: Follistatin-related protein 3 (256 aa).

A signal peptide spans 1–23 (MRPGALWPLLWGALVWAVGSVGA). The 72-residue stretch at 34–105 (GVCWLQQGKE…SCDGVECGPG (72 aa)) folds into the TB domain. 8 disulfides stabilise this stretch: cysteine 36–cysteine 59, cysteine 46–cysteine 90, cysteine 60–cysteine 93, cysteine 97–cysteine 108, cysteine 102–cysteine 117, cysteine 119–cysteine 151, cysteine 123–cysteine 144, and cysteine 133–cysteine 165. Residue asparagine 71 is glycosylated (N-linked (GlcNAc...) asparagine). The Follistatin-like 1 domain maps to 97–117 (CDGVECGPGKACRMLGGRPHC). 2 consecutive Kazal-like domains span residues 111-167 (LGGR…RCQK) and 187-243 (SAHC…ICTG). One can recognise a Follistatin-like 2 domain in the interval 168 to 191 (SCAQVVCPRPQSCLVDQTGSAHCV). Cystine bridges form between cysteine 193–cysteine 227, cysteine 198–cysteine 220, and cysteine 209–cysteine 241. Residue asparagine 213 is glycosylated (N-linked (GlcNAc...) asparagine).

Interacts with INHBA and INHBB. Interacts with FN1. Interacts with ADAM12. Interacts with MLLT10; the interaction enhances MLLT10 in vitro transcriptional activity and self-association. Interacts with MSTN.

The protein localises to the secreted. The protein resides in the nucleus. Its function is as follows. The secreted form is a binding and antagonizing protein for members of the TGF-beta family, such as activin, BMP2 and MSTN. Inhibits activin A-, activin B-, BMP2- and MSDT-induced cellular signaling; more effective on activin A than on activin B. Involved in bone formation; inhibits osteoclast differentiation. Involved in hematopoiesis; involved in differentiation of hemopoietic progenitor cells, increases hematopoietic cell adhesion to fibronectin and seems to contribute to the adhesion of hematopoietic precursor cells to the bone marrow stroma. The nuclear form is probably involved in transcriptional regulation via interaction with MLLT10. The chain is Follistatin-related protein 3 (Fstl3) from Rattus norvegicus (Rat).